The chain runs to 234 residues: Carboxy-S-adenosyl-L-methionine synthase (234 aa).

S-adenosyl-L-methionine is bound by residues Y35, 60–62 (GSS), 83–84 (DN), N124, and R191.

This sequence belongs to the class I-like SAM-binding methyltransferase superfamily. Cx-SAM synthase family. Homodimer.

The enzyme catalyses prephenate + S-adenosyl-L-methionine = carboxy-S-adenosyl-L-methionine + 3-phenylpyruvate + H2O. Its function is as follows. Catalyzes the conversion of S-adenosyl-L-methionine (SAM) to carboxy-S-adenosyl-L-methionine (Cx-SAM). The chain is Carboxy-S-adenosyl-L-methionine synthase from Nautilia profundicola (strain ATCC BAA-1463 / DSM 18972 / AmH).